The following is a 258-amino-acid chain: MAQVHPTAVVHPDARLHETVEVGPYSIIGPQVTIGAGSRVGPHVVIEGRTTLGERNRIFQFASVGADPQDLKYAGEDTELVLGDDNQIREFVSLHKGTAGGGGATRVGSGNLFMANCHVAHDCVVGNGCRIGNGSALAGHVTMEDHVIISGLAAVHQFTRLGKHAFISGGAMVTMDIPPYATAQGDRAELVGLNTVGLERSGFSKEQIERVKEAHRILFRSKLTLQEAMVRLRAELAGHSEVDHLIQFIQQSKRGLTR.

This sequence belongs to the transferase hexapeptide repeat family. LpxA subfamily. Homotrimer.

It is found in the cytoplasm. It catalyses the reaction a (3R)-hydroxyacyl-[ACP] + UDP-N-acetyl-alpha-D-glucosamine = a UDP-3-O-[(3R)-3-hydroxyacyl]-N-acetyl-alpha-D-glucosamine + holo-[ACP]. The protein operates within glycolipid biosynthesis; lipid IV(A) biosynthesis; lipid IV(A) from (3R)-3-hydroxytetradecanoyl-[acyl-carrier-protein] and UDP-N-acetyl-alpha-D-glucosamine: step 1/6. Its function is as follows. Involved in the biosynthesis of lipid A, a phosphorylated glycolipid that anchors the lipopolysaccharide to the outer membrane of the cell. The polypeptide is Acyl-[acyl-carrier-protein]--UDP-N-acetylglucosamine O-acyltransferase (Myxococcus xanthus (strain DK1622)).